The chain runs to 176 residues: Inorganic pyrophosphatase (176 aa).

Residues Lys-30, Arg-44, and Tyr-56 each contribute to the substrate site. Mg(2+) is bound by residues Asp-66, Asp-71, and Asp-103. Tyr-142 serves as a coordination point for substrate.

This sequence belongs to the PPase family. Homohexamer. The cofactor is Mg(2+).

The protein resides in the cytoplasm. It catalyses the reaction diphosphate + H2O = 2 phosphate + H(+). Its function is as follows. Catalyzes the hydrolysis of inorganic pyrophosphate (PPi) forming two phosphate ions. The protein is Inorganic pyrophosphatase of Vibrio parahaemolyticus serotype O3:K6 (strain RIMD 2210633).